Consider the following 117-residue polypeptide: Large ribosomal subunit protein uL18 (117 aa).

Belongs to the universal ribosomal protein uL18 family. In terms of assembly, part of the 50S ribosomal subunit; part of the 5S rRNA/L5/L18/L25 subcomplex. Contacts the 5S and 23S rRNAs.

In terms of biological role, this is one of the proteins that bind and probably mediate the attachment of the 5S RNA into the large ribosomal subunit, where it forms part of the central protuberance. This chain is Large ribosomal subunit protein uL18, found in Blochmanniella pennsylvanica (strain BPEN).